Here is a 102-residue protein sequence, read N- to C-terminus: NADH-quinone oxidoreductase subunit K 1 (102 aa).

The next 3 helical transmembrane spans lie at 5–25, 31–51, and 65–85; these read LSHY…GIFL, IVIL…MVAF, and LFIL…LVVF.

This sequence belongs to the complex I subunit 4L family. As to quaternary structure, NDH-1 is composed of 14 different subunits. Subunits NuoA, H, J, K, L, M, N constitute the membrane sector of the complex.

The protein localises to the cell inner membrane. It catalyses the reaction a quinone + NADH + 5 H(+)(in) = a quinol + NAD(+) + 4 H(+)(out). Its function is as follows. NDH-1 shuttles electrons from NADH, via FMN and iron-sulfur (Fe-S) centers, to quinones in the respiratory chain. The immediate electron acceptor for the enzyme in this species is believed to be ubiquinone. Couples the redox reaction to proton translocation (for every two electrons transferred, four hydrogen ions are translocated across the cytoplasmic membrane), and thus conserves the redox energy in a proton gradient. The sequence is that of NADH-quinone oxidoreductase subunit K 1 from Rhizobium etli (strain CIAT 652).